Here is a 210-residue protein sequence, read N- to C-terminus: MANILYITCNLKPREQSRSLTIGNEFLKRYSERHPEDRIDFLDLYRDPIQRIDTDVLNGWGKLRTGASFDLLSEDEVRKIGRIGALADQFVATDKYVFVTPMWNLGFPAELKMYIDTVCVVGKTFTYTESGAVGLLRGMGKKCLHIHSCGGFHCGSADDHSVPYLKSVMNFMGIEDFRSVVVEGMDALPHRAEEFMDKALAESREAAALF.

FMN is bound by residues 17-19 (SRS), 102-105 (MWNL), and 148-151 (SCGG).

The protein belongs to the azoreductase type 1 family. As to quaternary structure, homodimer. FMN is required as a cofactor.

It catalyses the reaction 2 a quinone + NADH + H(+) = 2 a 1,4-benzosemiquinone + NAD(+). The catalysed reaction is N,N-dimethyl-1,4-phenylenediamine + anthranilate + 2 NAD(+) = 2-(4-dimethylaminophenyl)diazenylbenzoate + 2 NADH + 2 H(+). Quinone reductase that provides resistance to thiol-specific stress caused by electrophilic quinones. Functionally, also exhibits azoreductase activity. Catalyzes the reductive cleavage of the azo bond in aromatic azo compounds to the corresponding amines. This is FMN-dependent NADH:quinone oxidoreductase from Trichlorobacter lovleyi (strain ATCC BAA-1151 / DSM 17278 / SZ) (Geobacter lovleyi).